A 504-amino-acid chain; its full sequence is Hydroxyisobutyraldehyde dehydrogenase (504 aa).

The active-site Proton acceptor is the Glu-260. The active-site Nucleophile is Cys-294.

Belongs to the aldehyde dehydrogenase family.

The protein localises to the cytoplasm. It carries out the reaction 2-hydroxy-2-methylpropanal + NAD(+) + H2O = 2-hydroxy-2-methylpropanoate + NADH + 2 H(+). Involved in the degradation of methyl tert-butyl ether (MTBE). Catalyzes the conversion of hydroxyisobutyraldehyde to hydroxyisobutyric acid (HIBA). In Mycolicibacterium austroafricanum (Mycobacterium austroafricanum), this protein is Hydroxyisobutyraldehyde dehydrogenase.